Reading from the N-terminus, the 304-residue chain is Protein BOBBER 1 (304 aa).

Position 2 is an N-acetylalanine (A2). Residues 54 to 106 (EDEIVVAVRAAKEKLKKAEKKKAEKESVKPVEKKAEKEIVKLVEKKVEKESVK) adopt a coiled-coil conformation. Residues 111-141 (ASSAEPIEVEKPKEEEEKKESGPIVPNKGNG) are disordered. Over residues 118–131 (EVEKPKEEEEKKES) the composition is skewed to basic and acidic residues. The CS domain maps to 142–231 (TDLENYSWIQ…DQMEWWKCCV (90 aa)).

Expressed in all seedling tissues with highest expression levels at the root tip.

It is found in the cytoplasm. The protein resides in the cytoplasmic granule. In terms of biological role, small heat shock protein required for the establishment of auxin gradients and for patterning of the apical domain of the embryo. Involved in the specification of the cotyledon primordia. Also required for normal inflorescence and floral meristem function, normal developmental patterning and thermotolerance. Acts as a molecular chaperone. This Arabidopsis thaliana (Mouse-ear cress) protein is Protein BOBBER 1 (BOB1).